A 591-amino-acid chain; its full sequence is Metalloendopeptidase OPG085 (591 aa).

Residue His-41 coordinates Zn(2+). The active site involves Glu-44. Residues His-45 and Glu-112 each coordinate Zn(2+).

This sequence belongs to the peptidase M44 family. Zn(2+) serves as cofactor. Undergoes proteolytic processing during the course of infection. May be cleaved into 46 kDa and 22 kDa products (Potential).

The protein resides in the virion. Probably involved in maturation of some viral proteins by processing them preferentially at Ala-Gly-|-Ser/Thr/Lys motifs. Does not seem to be responsible for the cleavage of major core proteins. In Homo sapiens (Human), this protein is Metalloendopeptidase OPG085 (OPG085).